We begin with the raw amino-acid sequence, 76 residues long: Sec-independent protein translocase protein TatA (76 aa).

The chain crosses the membrane as a helical span at residues 1-21 (MGSFSIWHWLIVLVIVMLIFG). The tract at residues 47 to 76 (NADKPAEEAQPTQQVGGHTIDVEVKEKTKS) is disordered. Basic and acidic residues predominate over residues 66 to 76 (IDVEVKEKTKS).

It belongs to the TatA/E family. As to quaternary structure, the Tat system comprises two distinct complexes: a TatABC complex, containing multiple copies of TatA, TatB and TatC subunits, and a separate TatA complex, containing only TatA subunits. Substrates initially bind to the TatABC complex, which probably triggers association of the separate TatA complex to form the active translocon.

The protein localises to the cell inner membrane. In terms of biological role, part of the twin-arginine translocation (Tat) system that transports large folded proteins containing a characteristic twin-arginine motif in their signal peptide across membranes. TatA could form the protein-conducting channel of the Tat system. In Dechloromonas aromatica (strain RCB), this protein is Sec-independent protein translocase protein TatA.